The primary structure comprises 93 residues: Acylphosphatase (93 aa).

The region spanning 6–93 is the Acylphosphatase-like domain; the sequence is RAHILVSGEV…GDLGPFSVRH (88 aa). Residues R21 and N39 contribute to the active site.

The protein belongs to the acylphosphatase family.

The enzyme catalyses an acyl phosphate + H2O = a carboxylate + phosphate + H(+). In Anaeromyxobacter sp. (strain Fw109-5), this protein is Acylphosphatase (acyP).